The following is a 400-amino-acid chain: Argininosuccinate synthase (400 aa).

8–16 (AYSGGLDTS) is a binding site for ATP. Tyr87 contributes to the L-citrulline binding site. Gly117 contributes to the ATP binding site. Residues Thr119, Asn123, and Asp124 each coordinate L-aspartate. Residue Asn123 coordinates L-citrulline. Residues Arg127, Ser175, Glu260, and Tyr272 each coordinate L-citrulline.

The protein belongs to the argininosuccinate synthase family. Type 1 subfamily. Homotetramer.

The protein localises to the cytoplasm. The catalysed reaction is L-citrulline + L-aspartate + ATP = 2-(N(omega)-L-arginino)succinate + AMP + diphosphate + H(+). Its pathway is amino-acid biosynthesis; L-arginine biosynthesis; L-arginine from L-ornithine and carbamoyl phosphate: step 2/3. The chain is Argininosuccinate synthase from Mycolicibacterium vanbaalenii (strain DSM 7251 / JCM 13017 / BCRC 16820 / KCTC 9966 / NRRL B-24157 / PYR-1) (Mycobacterium vanbaalenii).